We begin with the raw amino-acid sequence, 261 residues long: Glandular kallikrein-7, submandibular/renal (261 aa).

The signal sequence occupies residues 1-18 (MWFLILFLDLSLGQIDAA). Positions 19–24 (PPGQSR) are cleaved as a propeptide — activation peptide. Residues 25–258 (VIGGYKCEKN…FTSWIKEVMK (234 aa)) form the Peptidase S1 domain. 5 cysteine pairs are disulfide-bonded: cysteine 31–cysteine 173, cysteine 50–cysteine 66, cysteine 152–cysteine 219, cysteine 184–cysteine 198, and cysteine 209–cysteine 234. Catalysis depends on histidine 65, which acts as the Charge relay system. Residue asparagine 108 is glycosylated (N-linked (GlcNAc...) asparagine). The active-site Charge relay system is the aspartate 120. The active-site Charge relay system is the serine 213.

This sequence belongs to the peptidase S1 family. Kallikrein subfamily. Kidney and submandibular gland. Not expressed in liver, pancreas, spleen, parotid, testis, cortex, prostate, ovary and pituitary.

It catalyses the reaction Preferential cleavage of Arg-|-Xaa bonds in small molecule substrates. Highly selective action to release kallidin (lysyl-bradykinin) from kininogen involves hydrolysis of Met-|-Xaa or Leu-|-Xaa.. In terms of biological role, glandular kallikreins cleave Met-Lys and Arg-Ser bonds in kininogen to release Lys-bradykinin. Predominant kallikrein protein in the kidney. This chain is Glandular kallikrein-7, submandibular/renal (Klk7), found in Rattus norvegicus (Rat).